Reading from the N-terminus, the 281-residue chain is Diaminopimelate epimerase (281 aa).

Substrate contacts are provided by N13 and N66. Catalysis depends on C75, which acts as the Proton donor. Residues 76-77 (GN), N164, N197, and 215-216 (ER) contribute to the substrate site. Catalysis depends on C224, which acts as the Proton acceptor. 225-226 (GT) serves as a coordination point for substrate.

It belongs to the diaminopimelate epimerase family. As to quaternary structure, homodimer.

It localises to the cytoplasm. It catalyses the reaction (2S,6S)-2,6-diaminopimelate = meso-2,6-diaminopimelate. It functions in the pathway amino-acid biosynthesis; L-lysine biosynthesis via DAP pathway; DL-2,6-diaminopimelate from LL-2,6-diaminopimelate: step 1/1. Catalyzes the stereoinversion of LL-2,6-diaminopimelate (L,L-DAP) to meso-diaminopimelate (meso-DAP), a precursor of L-lysine and an essential component of the bacterial peptidoglycan. The polypeptide is Diaminopimelate epimerase (Gloeothece citriformis (strain PCC 7424) (Cyanothece sp. (strain PCC 7424))).